Consider the following 470-residue polypeptide: tRNA (guanine(37)-N(1))-methyltransferase (470 aa).

Residues 304-305 (DL), 332-333 (DG), and Asn-370 contribute to the S-adenosyl-L-methionine site.

This sequence belongs to the class I-like SAM-binding methyltransferase superfamily. TRM5/TYW2 family. As to quaternary structure, monomer.

It is found in the mitochondrion matrix. The protein localises to the nucleus. Its subcellular location is the cytoplasm. The catalysed reaction is guanosine(37) in tRNA + S-adenosyl-L-methionine = N(1)-methylguanosine(37) in tRNA + S-adenosyl-L-homocysteine + H(+). Its function is as follows. Specifically methylates the N1 position of guanosine-37 in various cytoplasmic and mitochondrial tRNAs. Methylation is not dependent on the nature of the nucleoside 5' of the target nucleoside. This is the first step in the biosynthesis of wybutosine (yW), a modified base adjacent to the anticodon of tRNAs and required for accurate decoding. This Theileria parva (East coast fever infection agent) protein is tRNA (guanine(37)-N(1))-methyltransferase.